A 245-amino-acid polypeptide reads, in one-letter code: Pathogenesis-related thaumatin-like protein 3.6 (245 aa).

Residues 1 to 19 (GSIPFWIALIASFSVFLQG) form the signal peptide. 8 cysteine pairs are disulfide-bonded: C33–C226, C74–C84, C89–C95, C142–C215, C148–C198, C156–C166, C170–C179, and C180–C185. A glycan (N-linked (GlcNAc...) asparagine) is linked at N90. A glycan (N-linked (GlcNAc...) asparagine) is linked at N186.

Belongs to the thaumatin family. As to expression, mostly expressed in strobili, and, to a lower extent, in roots of seedlings and saplings.

May be involved in disease resistance. This is Pathogenesis-related thaumatin-like protein 3.6 from Cryptomeria japonica (Japanese cedar).